The sequence spans 141 residues: Sec-independent protein translocase protein TatB (141 aa).

Residues 2 to 22 (FANVGWGEMLVLVIAGLVILG) form a helical membrane-spanning segment. The tract at residues 92 to 141 (IFTGRFDSTSSDQPGSGKPPKPQSGPGPAAASGPAATTTPASTPFDPDAT) is disordered. The segment covering 117-141 (PGPAAASGPAATTTPASTPFDPDAT) has biased composition (low complexity).

The protein belongs to the TatB family. The Tat system comprises two distinct complexes: a TatABC complex, containing multiple copies of TatA, TatB and TatC subunits, and a separate TatA complex, containing only TatA subunits. Substrates initially bind to the TatABC complex, which probably triggers association of the separate TatA complex to form the active translocon.

The protein localises to the cell membrane. Part of the twin-arginine translocation (Tat) system that transports large folded proteins containing a characteristic twin-arginine motif in their signal peptide across membranes. Together with TatC, TatB is part of a receptor directly interacting with Tat signal peptides. TatB may form an oligomeric binding site that transiently accommodates folded Tat precursor proteins before their translocation. This is Sec-independent protein translocase protein TatB from Mycolicibacterium gilvum (strain PYR-GCK) (Mycobacterium gilvum (strain PYR-GCK)).